Here is a 128-residue protein sequence, read N- to C-terminus: uncharacterized protein (128 aa).

Over residues 1-28 (MDADDFGKKDLENGNESPKKPIFMKDWK) the composition is skewed to basic and acidic residues. A disordered region spans residues 1–30 (MDADDFGKKDLENGNESPKKPIFMKDWKNS).

It localises to the cytoplasm. The protein resides in the nucleus. This is an uncharacterized protein from Schizosaccharomyces pombe (strain 972 / ATCC 24843) (Fission yeast).